A 429-amino-acid chain; its full sequence is MDRIRIIGGNKLHGTIPISGAKNAALPLMIAAMLSDETLILDNVPRLADVALLQRILGNHGVDIMAVGKRPGDHEYQGQTLHISAKNIIDTTAPYDLVSKMRASFWVIAPLLARMHEAKVSLPGGCAIGTRPVDLLIMALEKLGAELSIDAGYVVAKAPGGLKGATIEFPKVTVSGTHVALMAAALAKGTTIIANAACEPEITDVADCLNKMGAKITGAGTPRIMIEGVSKLHGARHTVLPDRIETGTYAMAVAMTGGEVQLSGARPELLQSALDVLTQAGVTITVNNDGIKVARNGAGISPVTVTTAPFPGFPTDLQAQLMALMTRAKGASHITETIFENRFMHVQELARFGARIQLDGETATIDGVAKLRGAPVMATDLRASVSLVIAALAAEGETMVNRIYHLDRGFERLEEKLSACGATIERISG.

22–23 provides a ligand contact to phosphoenolpyruvate; the sequence is KN. Arginine 102 provides a ligand contact to UDP-N-acetyl-alpha-D-glucosamine. Cysteine 126 acts as the Proton donor in catalysis. Position 126 is a 2-(S-cysteinyl)pyruvic acid O-phosphothioketal (cysteine 126). UDP-N-acetyl-alpha-D-glucosamine contacts are provided by residues 131–135, aspartate 316, and isoleucine 338; that span reads RPVDL.

Belongs to the EPSP synthase family. MurA subfamily.

The protein localises to the cytoplasm. It catalyses the reaction phosphoenolpyruvate + UDP-N-acetyl-alpha-D-glucosamine = UDP-N-acetyl-3-O-(1-carboxyvinyl)-alpha-D-glucosamine + phosphate. Its pathway is cell wall biogenesis; peptidoglycan biosynthesis. Functionally, cell wall formation. Adds enolpyruvyl to UDP-N-acetylglucosamine. This is UDP-N-acetylglucosamine 1-carboxyvinyltransferase from Rhodopseudomonas palustris (strain BisB5).